The primary structure comprises 464 residues: Fumarate hydratase class II (464 aa).

Substrate contacts are provided by residues 98-100 (SGT), 129-132 (HPND), 139-141 (SSN), and T187. H188 functions as the Proton donor/acceptor in the catalytic mechanism. Residue S318 is part of the active site. Substrate-binding positions include S319 and 324 to 326 (KVN).

The protein belongs to the class-II fumarase/aspartase family. Fumarase subfamily. Homotetramer.

It localises to the cytoplasm. It catalyses the reaction (S)-malate = fumarate + H2O. Its pathway is carbohydrate metabolism; tricarboxylic acid cycle; (S)-malate from fumarate: step 1/1. In terms of biological role, involved in the TCA cycle. Catalyzes the stereospecific interconversion of fumarate to L-malate. The protein is Fumarate hydratase class II of Wigglesworthia glossinidia brevipalpis.